A 130-amino-acid chain; its full sequence is Small ribosomal subunit protein uS11 (130 aa).

This sequence belongs to the universal ribosomal protein uS11 family. As to quaternary structure, part of the 30S ribosomal subunit. Interacts with proteins S7 and S18. Binds to IF-3.

In terms of biological role, located on the platform of the 30S subunit, it bridges several disparate RNA helices of the 16S rRNA. Forms part of the Shine-Dalgarno cleft in the 70S ribosome. This Thermotoga petrophila (strain ATCC BAA-488 / DSM 13995 / JCM 10881 / RKU-1) protein is Small ribosomal subunit protein uS11.